The primary structure comprises 419 residues: S-adenosylmethionine synthase (419 aa).

His-15 serves as a coordination point for ATP. Asp-17 serves as a coordination point for Mg(2+). Glu-43 contributes to the K(+) binding site. L-methionine is bound by residues Glu-56 and Gln-100. Positions 100-110 (QSPDIAQGVDE) are flexible loop. ATP-binding positions include 171–173 (DGK), 248–249 (KF), Asp-257, 263–264 (RK), Ala-280, and Lys-284. Position 257 (Asp-257) interacts with L-methionine. Residue Lys-288 participates in L-methionine binding.

The protein belongs to the AdoMet synthase family. Homotetramer; dimer of dimers. Mg(2+) is required as a cofactor. K(+) serves as cofactor.

The protein resides in the cytoplasm. It carries out the reaction L-methionine + ATP + H2O = S-adenosyl-L-methionine + phosphate + diphosphate. The protein operates within amino-acid biosynthesis; S-adenosyl-L-methionine biosynthesis; S-adenosyl-L-methionine from L-methionine: step 1/1. Functionally, catalyzes the formation of S-adenosylmethionine (AdoMet) from methionine and ATP. The overall synthetic reaction is composed of two sequential steps, AdoMet formation and the subsequent tripolyphosphate hydrolysis which occurs prior to release of AdoMet from the enzyme. This chain is S-adenosylmethionine synthase, found in Synechococcus sp. (strain CC9311).